We begin with the raw amino-acid sequence, 117 residues long: Probable non-functional T cell receptor gamma variable (117 aa).

The signal sequence occupies residues 1–20 (MRWALAVLLAFLSPASQISS). The 97-residue stretch at 21-117 (NLEGRTKSVT…GFYYCATWDR (97 aa)) folds into the Ig-like domain. An intrachain disulfide couples cysteine 41 to cysteine 112. The N-linked (GlcNAc...) asparagine glycan is linked to asparagine 105.

In terms of assembly, gamma-delta TR is a heterodimer composed of a gamma and delta chain; disulfide-linked. The gamma-delta TR is associated with the transmembrane signaling CD3 coreceptor proteins following the stoichiometry: a single gamma-delta TR heterodimer associates with one CD3D-CD3E heterodimer, one CD3G-CD3E heterodimer and one CD247 homodimer forming a stable octameric structure. Upon activation, gamma-delta TR complex associates with FCER1G to initiate intracellular signaling.

It localises to the cell membrane. Functionally, probable non-functional open reading frame (ORF) of V region of the variable domain of T cell receptor (TR) gamma chain. Non-functional ORF generally cannot participate in the synthesis of a productive T cell receptor (TR) chain due to altered V-(D)-J or switch recombination and/or splicing site (at mRNA level) and/or conserved amino acid change (protein level). Gamma-delta TRs recognize a variety of self and foreign non-peptide antigens frequently expressed at the epithelial boundaries between the host and external environment, including endogenous lipids presented by MH-like protein CD1D and phosphoantigens presented by butyrophilin-like molecule BTN3A1. Upon antigen recognition induces rapid, innate-like immune responses involved in pathogen clearance and tissue repair. Binding of gamma-delta TR complex to antigen triggers phosphorylation of immunoreceptor tyrosine-based activation motifs (ITAMs) in the CD3 chains by the LCK and FYN kinases, allowing the recruitment, phosphorylation, and activation of ZAP70 that facilitates phosphorylation of the scaffolding proteins LCP2 and LAT. This lead to the formation of a supramolecular signalosome that recruits the phospholipase PLCG1, resulting in calcium mobilization and ERK activation, ultimately leading to T cell expansion and differentiation into effector cells. Gamma-delta TRs are produced through somatic rearrangement of a limited repertoire of variable (V), diversity (D), and joining (J) genes. The potential diversity of gamma-delta TRs is conferred by the unique ability to rearrange (D) genes in tandem and to utilize all three reading frames. The combinatorial diversity is considerably increased by the sequence exonuclease trimming and random nucleotide (N) region additions which occur during the V-(D)-J rearrangements. This Homo sapiens (Human) protein is Probable non-functional T cell receptor gamma variable.